The chain runs to 298 residues: Acetylglutamate kinase (298 aa).

Substrate-binding positions include 69-70, Arg-91, and Asn-191; that span reads GG.

It belongs to the acetylglutamate kinase family. ArgB subfamily.

The protein localises to the cytoplasm. The catalysed reaction is N-acetyl-L-glutamate + ATP = N-acetyl-L-glutamyl 5-phosphate + ADP. The protein operates within amino-acid biosynthesis; L-arginine biosynthesis; N(2)-acetyl-L-ornithine from L-glutamate: step 2/4. Functionally, catalyzes the ATP-dependent phosphorylation of N-acetyl-L-glutamate. This chain is Acetylglutamate kinase, found in Neisseria meningitidis serogroup A / serotype 4A (strain DSM 15465 / Z2491).